The following is a 54-amino-acid chain: U1-ctenitoxin-Pr1a (54 aa).

5 disulfide bridges follow: cysteine 2-cysteine 19, cysteine 9-cysteine 25, cysteine 16-cysteine 51, cysteine 18-cysteine 39, and cysteine 27-cysteine 37.

As to expression, expressed by the venom gland.

It localises to the secreted. Its function is as follows. Omega-agatoxins are antagonists of voltage-gated calcium channels (Cav). Causes rapid general flaccid paralysis followed by death in 10-30 minutes when injected in mice at dose levels of 5 ug per mouse. This Phoneutria reidyi (Brazilian Amazonian armed spider) protein is U1-ctenitoxin-Pr1a.